Consider the following 591-residue polypeptide: Solute carrier family 40 member 2, chloroplastic (591 aa).

A chloroplast-targeting transit peptide spans 1–66; it reads MGMVTATAAA…RCYITNVEVD (66 aa). 11 helical membrane passes run 159–179, 206–226, 242–262, 293–313, 318–338, 391–411, 419–439, 452–472, 482–502, 518–540, and 547–569; these read WPAALAILHPSLLPVAIVGFF, GLNAVQVATQLISAAMVIYAM, WFIALVAAGAIERLAGLALGV, LVCETVGASVFGLLLSKYHPV, IACGLMICSFPVLVVLGQLIN, VATVFLNFNVALAPGAIMTAL, PSIVGAFSGLCSIMGLVATFI, AGAAGLIVQASLLSVALVVYW, LLIFLAAIALSRLGHMSYDVV, LIGGMEVSISSLAELVMLGMAII, and FGFLAILSVSSVAGAAWMFCQWL.

Belongs to the ferroportin (FP) (TC 2.A.100) family. SLC40A subfamily.

Its subcellular location is the membrane. The protein resides in the plastid. The protein localises to the chloroplast envelope. In terms of biological role, may be involved in iron transport and iron homeostasis. The sequence is that of Solute carrier family 40 member 2, chloroplastic from Oryza sativa subsp. japonica (Rice).